The sequence spans 341 residues: Ribosomal RNA small subunit methyltransferase H (341 aa).

Residues 47 to 49, Asp64, Phe91, Asp109, and Gln116 each bind S-adenosyl-L-methionine; that span reads GGY.

This sequence belongs to the methyltransferase superfamily. RsmH family.

It is found in the cytoplasm. The enzyme catalyses cytidine(1402) in 16S rRNA + S-adenosyl-L-methionine = N(4)-methylcytidine(1402) in 16S rRNA + S-adenosyl-L-homocysteine + H(+). Its function is as follows. Specifically methylates the N4 position of cytidine in position 1402 (C1402) of 16S rRNA. This chain is Ribosomal RNA small subunit methyltransferase H, found in Rhizobium leguminosarum bv. trifolii (strain WSM1325).